The sequence spans 248 residues: MLYLHDVWVNWFEGEENGYNVCHFYEWRKDDTIELLDQVPLLKVDSTLYHYIENELLELPQKLLEDVHHKAYIRKNHERLQQEYCFVVTDGKGIIAIDTIGYNVPIRKSRLIPRQEQMVYEMVENVQAEKYEFQVEEMEKEHHILSPSPFVMNGLTRKERQLKQLLFMALDQLHTTKNTAEIRYWFTEWDPSAYGMVQHMEFEDIWAKLYDEAKAGWSEKHEQLCERLVKGQPFFEKLWEMENEQKVN.

This sequence belongs to the UPF0736 family.

The polypeptide is UPF0736 protein BCE33L1074 (Bacillus cereus (strain ZK / E33L)).